The sequence spans 318 residues: Energy-coupling factor transporter ATP-binding protein EcfA2 (318 aa).

An ABC transporter domain is found at 22-271; it reads LRAQGLKCVF…PEIMQTTSIA (250 aa). An ATP-binding site is contributed by 59 to 66; it reads GNSGSGKS.

Belongs to the ABC transporter superfamily. Energy-coupling factor EcfA family. As to quaternary structure, forms a stable energy-coupling factor (ECF) transporter complex composed of 2 membrane-embedded substrate-binding proteins (S component), 2 ATP-binding proteins (A component) and 2 transmembrane proteins (T component).

Its subcellular location is the cell membrane. ATP-binding (A) component of a common energy-coupling factor (ECF) ABC-transporter complex. Unlike classic ABC transporters this ECF transporter provides the energy necessary to transport a number of different substrates. The protein is Energy-coupling factor transporter ATP-binding protein EcfA2 of Mycoplasmoides gallisepticum (strain R(low / passage 15 / clone 2)) (Mycoplasma gallisepticum).